The chain runs to 431 residues: Serine--tRNA ligase (431 aa).

An L-serine-binding site is contributed by 237-239 (TAE). Residue 268–270 (RSE) participates in ATP binding. Glutamate 291 lines the L-serine pocket. 355 to 358 (EISS) contacts ATP. Serine 390 lines the L-serine pocket.

This sequence belongs to the class-II aminoacyl-tRNA synthetase family. Type-1 seryl-tRNA synthetase subfamily. As to quaternary structure, homodimer. The tRNA molecule binds across the dimer.

It is found in the cytoplasm. It carries out the reaction tRNA(Ser) + L-serine + ATP = L-seryl-tRNA(Ser) + AMP + diphosphate + H(+). The enzyme catalyses tRNA(Sec) + L-serine + ATP = L-seryl-tRNA(Sec) + AMP + diphosphate + H(+). The protein operates within aminoacyl-tRNA biosynthesis; selenocysteinyl-tRNA(Sec) biosynthesis; L-seryl-tRNA(Sec) from L-serine and tRNA(Sec): step 1/1. Catalyzes the attachment of serine to tRNA(Ser). Is also able to aminoacylate tRNA(Sec) with serine, to form the misacylated tRNA L-seryl-tRNA(Sec), which will be further converted into selenocysteinyl-tRNA(Sec). The polypeptide is Serine--tRNA ligase (Neisseria meningitidis serogroup C (strain 053442)).